A 361-amino-acid polypeptide reads, in one-letter code: Palmitoyltransferase ZDHHC16 (361 aa).

At 1 to 77 (MRGQRSLLLG…VYWLVDNVIR (77 aa)) the chain is on the cytoplasmic side. The helical transmembrane segment at 78-98 (WFGVVFVVLVIVLTGSIVAIA) threads the bilayer. Residues 99 to 116 (YLCVLPLILRTYSVPRLC) are Lumenal-facing. The helical transmembrane segment at 117–137 (WHFFYSHWNLILIVFHYYQAI) threads the bilayer. Residues 138–198 (TTPPGYPPQG…NNCVGHYNHR (61 aa)) are Cytoplasmic-facing. Residues 155–205 (SICKKCIYPKPARTHHCSICNRCVLKMDHHCPWLNNCVGHYNHRYFFSFCF) form the DHHC domain. Cys185 serves as the catalytic S-palmitoyl cysteine intermediate. Residues 199–219 (YFFSFCFFMTLGCVYCSYGSW) traverse the membrane as a helical segment. At 220–250 (DLFREAYAAIETYHQTPPPTFSFRERITHKS) the chain is on the lumenal side. The chain crosses the membrane as a helical span at residues 251-271 (LVYLWFLCSSVALALGALTMW). Topologically, residues 272–361 (HAVLISRGET…TAHSASVMAV (90 aa)) are cytoplasmic.

The protein belongs to the DHHC palmitoyltransferase family. Interacts with ABL1. Interacts with COPS5. In terms of tissue distribution, ubiquitously expressed.

The protein localises to the endoplasmic reticulum membrane. It catalyses the reaction L-cysteinyl-[protein] + hexadecanoyl-CoA = S-hexadecanoyl-L-cysteinyl-[protein] + CoA. In terms of biological role, palmitoyl acyltransferase that mediates palmitoylation of proteins such as PLN and ZDHHC6. Required during embryonic heart development and cardiac function, possibly by mediating palmitoylation of PLN, thereby affecting PLN phosphorylation and homooligomerization. Also required for eye development. Palmitoylates ZDHHC6, affecting the quaternary assembly of ZDHHC6, its localization, stability and function. May play a role in DNA damage response. May be involved in apoptosis regulation. Involved in the proliferation of neural stem cells by regulating the FGF/ERK pathway. The polypeptide is Palmitoyltransferase ZDHHC16 (Mus musculus (Mouse)).